The primary structure comprises 305 residues: Glutaminase 2 (305 aa).

Substrate contacts are provided by S61, N113, E158, N165, Y189, Y241, and V259.

Belongs to the glutaminase family. In terms of assembly, homotetramer.

It catalyses the reaction L-glutamine + H2O = L-glutamate + NH4(+). In Clostridium perfringens (strain 13 / Type A), this protein is Glutaminase 2.